Here is a 281-residue protein sequence, read N- to C-terminus: Nuclear transcription factor Y subunit nfya-2 (281 aa).

Disordered regions lie at residues 1–27 (MNPRGNPSKMPTQIVLNRRPAAPARPQ) and 163–261 (REMR…VQEE). The short motif at 150–173 (MVNPRQYKRIIKRREMRQKMEDSG) is the Subunit association domain (SAD) element. A compositionally biased stretch (basic and acidic residues) spans 166–188 (RQKMEDSGRLPLERQKYMHESRR). The segment at residues 180–204 (QKYMHESRRQHALKRRRTGGRFDAN) is a DNA-binding region (NFYA/HAP2-type). Basic residues predominate over residues 189–198 (QHALKRRRTG). Over residues 204–220 (NAEAAAASSEPSISSAA) the composition is skewed to low complexity.

The protein belongs to the NFYA/HAP2 subunit family. As to quaternary structure, forms a heterotrimeric transcription factor complex (nfya-2-NF-Y complex) composed of nfya-2, nfyb-1 and nfyc-1. Interacts with the nfyb-1 and nfyc-1 dimer; the interaction is required for subsequent binding to the 5'-CCAAT-3' box motif in DNA. Does not interact with either nfyb-1 or nfyc-1 in their monomeric form. In terms of tissue distribution, highly expressed in certain parts of the gonads. Expressed in the spermatheca, intestine and in some neurons in the head. Not expressed in the intestine, the hypodermis, body wall muscle surrounding the pseudocoelomic space, secretory cells in the pharyngeal terminal bulb wall, in the small ganglia surrounding the pharynx and in the neurons running anteriorly to the sensory organs in the head.

The protein resides in the nucleus. Functionally, component of the sequence-specific heterotrimeric transcription factor (nfya-2-NF-Y) which specifically recognizes a 5'-CCAAT-3' box motif found in the promoters of its target genes to regulate their expression and control cellular identity in particular tissue types. In association with the components in the nfya-2-NF-Y complex, may repress the expression of the T-box transcription factor tbx-2 throughout larval development, which most likely restricts its expression to certain tissues. The protein is Nuclear transcription factor Y subunit nfya-2 of Caenorhabditis elegans.